A 406-amino-acid polypeptide reads, in one-letter code: 4-hydroxy-3-methylbut-2-en-1-yl diphosphate synthase (ferredoxin) (406 aa).

Residues Cys315, Cys318, Cys349, and Glu356 each coordinate [4Fe-4S] cluster.

The protein belongs to the IspG family. Requires [4Fe-4S] cluster as cofactor.

It carries out the reaction (2E)-4-hydroxy-3-methylbut-2-enyl diphosphate + 2 oxidized [2Fe-2S]-[ferredoxin] + H2O = 2-C-methyl-D-erythritol 2,4-cyclic diphosphate + 2 reduced [2Fe-2S]-[ferredoxin] + H(+). Its pathway is isoprenoid biosynthesis; isopentenyl diphosphate biosynthesis via DXP pathway; isopentenyl diphosphate from 1-deoxy-D-xylulose 5-phosphate: step 5/6. Functionally, converts 2C-methyl-D-erythritol 2,4-cyclodiphosphate (ME-2,4cPP) into 1-hydroxy-2-methyl-2-(E)-butenyl 4-diphosphate. The sequence is that of 4-hydroxy-3-methylbut-2-en-1-yl diphosphate synthase (ferredoxin) from Trichodesmium erythraeum (strain IMS101).